We begin with the raw amino-acid sequence, 189 residues long: Elongation factor P (189 aa).

Lys34 is modified (N6-(3,6-diaminohexanoyl)-5-hydroxylysine).

The protein belongs to the elongation factor P family. In terms of processing, may be beta-lysylated on the epsilon-amino group of Lys-34 by the combined action of EpmA and EpmB, and then hydroxylated on the C5 position of the same residue by EpmC (if this protein is present). Lysylation is critical for the stimulatory effect of EF-P on peptide-bond formation. The lysylation moiety may extend toward the peptidyltransferase center and stabilize the terminal 3-CCA end of the tRNA. Hydroxylation of the C5 position on Lys-34 may allow additional potential stabilizing hydrogen-bond interactions with the P-tRNA.

The protein resides in the cytoplasm. It functions in the pathway protein biosynthesis; polypeptide chain elongation. Functionally, involved in peptide bond synthesis. Alleviates ribosome stalling that occurs when 3 or more consecutive Pro residues or the sequence PPG is present in a protein, possibly by augmenting the peptidyl transferase activity of the ribosome. Modification of Lys-34 is required for alleviation. The chain is Elongation factor P from Buchnera aphidicola subsp. Acyrthosiphon pisum (strain APS) (Acyrthosiphon pisum symbiotic bacterium).